The following is a 161-amino-acid chain: S-ribosylhomocysteine lyase (161 aa).

Positions 57, 61, and 127 each coordinate Fe cation.

It belongs to the LuxS family. In terms of assembly, homodimer. Fe cation serves as cofactor.

It carries out the reaction S-(5-deoxy-D-ribos-5-yl)-L-homocysteine = (S)-4,5-dihydroxypentane-2,3-dione + L-homocysteine. Its function is as follows. Involved in the synthesis of autoinducer 2 (AI-2) which is secreted by bacteria and is used to communicate both the cell density and the metabolic potential of the environment. The regulation of gene expression in response to changes in cell density is called quorum sensing. Catalyzes the transformation of S-ribosylhomocysteine (RHC) to homocysteine (HC) and 4,5-dihydroxy-2,3-pentadione (DPD). In Streptococcus equi subsp. equi (strain 4047), this protein is S-ribosylhomocysteine lyase.